We begin with the raw amino-acid sequence, 264 residues long: Gap junction beta-1 protein (264 aa).

Residues 1–22 are Cytoplasmic-facing; sequence MNWAGLYAILSGVNRHSTSIGR. Residues 23-45 traverse the membrane as a helical segment; sequence IWLSVVFIFRIMVLVAAAESVWG. Residues 46-75 are Extracellular-facing; that stretch reads DEKSAFTCNTQQPGCNSVCYDHFFPISHIR. The helical transmembrane segment at 76–98 threads the bilayer; that stretch reads LWALQLIIVSTPALLVAMHVAHL. The Cytoplasmic segment spans residues 99–130; sequence QHQEKKELRLSRHVKDQELAEVKKHKVKISGT. The chain crosses the membrane as a helical span at residues 131–153; the sequence is LWWTYISSVFFRIIFEAAFMYIF. Residues 154 to 191 are Extracellular-facing; it reads YLIYPGYSMIRLLKCDAYPCPNTVDCFVSRPTEKTIFT. A helical transmembrane segment spans residues 192 to 214; that stretch reads VFMLVASGVCIVLNVAEVFFLIA. The Cytoplasmic portion of the chain corresponds to 215 to 264; that stretch reads QACTRRARRHRDSGSISKEHQQNEMNLLITGGSIIKRSAGQEKGDHCSTS.

The protein belongs to the connexin family. Beta-type (group I) subfamily. As to quaternary structure, a connexon is composed of a hexamer of connexins. Lung, liver, intestines, stomach and kidney.

It is found in the cell membrane. Its subcellular location is the cell junction. The protein resides in the gap junction. Functionally, one gap junction consists of a cluster of closely packed pairs of transmembrane channels, the connexons, through which materials of low MW diffuse from one cell to a neighboring cell. This Xenopus laevis (African clawed frog) protein is Gap junction beta-1 protein (gjb1).